The following is a 139-amino-acid chain: Small ribosomal subunit protein bS6 (139 aa).

It belongs to the bacterial ribosomal protein bS6 family.

Functionally, binds together with bS18 to 16S ribosomal RNA. This chain is Small ribosomal subunit protein bS6, found in Borreliella afzelii (strain PKo) (Borrelia afzelii).